The primary structure comprises 365 residues: MDNYEFSELLKTLKNKVGNIASIIKPENIQTRLKEIEELENSPSFWSDVKQAGIIGKEKTKITNLLKNYENAFNALNDANELFDLANSENDTETLEALFNDASKLEDTITSLEISMLLSGENDGKNAIVSIHPGAGGTESNDWASILYRMYLRFCEREGFKVETLDFQEGEEAGLKDVSFLVKGENAYGYLKAENGIHRLVRTSPFDSAGRRHTSFSSVMVSPELDDDIEIEIEEKDIRIDYYRASGAGGQHVNKTESAVRITHFPTGIVVQCQNDRSQHKNKATAFKMLKSRLYELELMKQQDSANTGEKSEIGWGHQIRSYVLFPYQQVKDNRSGEAFSQVDNILDGDIKKMIEGVLIALKAE.

Gln251 is modified (N5-methylglutamine).

The protein belongs to the prokaryotic/mitochondrial release factor family. Post-translationally, methylated by PrmC. Methylation increases the termination efficiency of RF2.

Its subcellular location is the cytoplasm. Peptide chain release factor 2 directs the termination of translation in response to the peptide chain termination codons UGA and UAA. In Campylobacter jejuni subsp. jejuni serotype O:23/36 (strain 81-176), this protein is Peptide chain release factor 2.